The sequence spans 285 residues: Putative sugar uptake protein lmo0169 (285 aa).

Helical transmembrane passes span 5–24, 31–48, 53–71, 84–106, 116–135, 151–173, 178–195, 207–226, 232–254, and 263–282; these read IALI…SKIG, IIGT…VFIF, YTAT…WSLG, VSKT…GVFA, LVLG…LTSY, IITL…WFDI, AILP…LFSI, WLNM…LLFS, IATG…ILFL, and LILV…MIGI.

Belongs to the GRP transporter (TC 2.A.7.5) family.

It localises to the cell membrane. This Listeria monocytogenes serovar 1/2a (strain ATCC BAA-679 / EGD-e) protein is Putative sugar uptake protein lmo0169.